Consider the following 63-residue polypeptide: Trypsin inhibitor 5 (63 aa).

The first 21 residues, 1-21, serve as a signal peptide directing secretion; sequence MASVAESSGVVEVIELISDGG. The propeptide occupies 22–34; it reads NDLPRKIMSGRHG. Disulfide bonds link C37–C54, C44–C56, and C50–C62.

It belongs to the protease inhibitor I7 (squash-type serine protease inhibitor) family.

The protein localises to the secreted. Functionally, inhibits trypsin. This is Trypsin inhibitor 5 from Luffa aegyptiaca (Sponge gourd).